Here is a 925-residue protein sequence, read N- to C-terminus: Translation initiation factor IF-2 (925 aa).

Disordered stretches follow at residues 52–84 (GGGKAAEGAAKAPAKAAAKGDAKTAAKGDVKAP) and 98–326 (AGGN…GVRL). The segment covering 57–68 (AEGAAKAPAKAA) has biased composition (low complexity). Over residues 69-84 (AKGDAKTAAKGDVKAP) the composition is skewed to basic and acidic residues. The span at 98–138 (AGGNGEAAAPPAQPGGTATTPAAQATPEAPARPGPAAARPS) shows a compositional bias: low complexity. Pro residues-rich tracts occupy residues 139 to 169 (APAPGQPKPPAPGQPPRPGATPGPRPGPAPK) and 193 to 207 (PRPVPRPGAPRPGAP). The span at 236 to 296 (RPGGGRPGGP…GAAGAFGRPG (61 aa)) shows a compositional bias: gly residues. The span at 300 to 309 (RRGRKSKRQK) shows a compositional bias: basic residues. Residues 421-592 (TRPPVVTVMG…AVLLTADAAL (172 aa)) enclose the tr-type G domain. The interval 430-437 (GHVDHGKT) is G1. Position 430 to 437 (430 to 437 (GHVDHGKT)) interacts with GTP. Positions 455–459 (GITQH) are G2. The G3 stretch occupies residues 480–483 (DTPG). Residues 480–484 (DTPGH) and 534–537 (NKID) each bind GTP. The G4 stretch occupies residues 534 to 537 (NKID). Positions 570–572 (SAK) are G5.

It belongs to the TRAFAC class translation factor GTPase superfamily. Classic translation factor GTPase family. IF-2 subfamily.

It is found in the cytoplasm. One of the essential components for the initiation of protein synthesis. Protects formylmethionyl-tRNA from spontaneous hydrolysis and promotes its binding to the 30S ribosomal subunits. Also involved in the hydrolysis of GTP during the formation of the 70S ribosomal complex. The protein is Translation initiation factor IF-2 of Mycolicibacterium paratuberculosis (strain ATCC BAA-968 / K-10) (Mycobacterium paratuberculosis).